Here is a 227-residue protein sequence, read N- to C-terminus: 2-C-methyl-D-erythritol 4-phosphate cytidylyltransferase (227 aa).

This sequence belongs to the IspD/TarI cytidylyltransferase family. IspD subfamily.

The catalysed reaction is 2-C-methyl-D-erythritol 4-phosphate + CTP + H(+) = 4-CDP-2-C-methyl-D-erythritol + diphosphate. It participates in isoprenoid biosynthesis; isopentenyl diphosphate biosynthesis via DXP pathway; isopentenyl diphosphate from 1-deoxy-D-xylulose 5-phosphate: step 2/6. Its function is as follows. Catalyzes the formation of 4-diphosphocytidyl-2-C-methyl-D-erythritol from CTP and 2-C-methyl-D-erythritol 4-phosphate (MEP). The polypeptide is 2-C-methyl-D-erythritol 4-phosphate cytidylyltransferase (Nostoc punctiforme (strain ATCC 29133 / PCC 73102)).